Consider the following 504-residue polypeptide: ATP synthase subunit alpha 2 (504 aa).

169–176 contributes to the ATP binding site; the sequence is GDRQTGKT.

The protein belongs to the ATPase alpha/beta chains family. F-type ATPases have 2 components, CF(1) - the catalytic core - and CF(0) - the membrane proton channel. CF(1) has five subunits: alpha(3), beta(3), gamma(1), delta(1), epsilon(1). CF(0) has three main subunits: a(1), b(2) and c(9-12). The alpha and beta chains form an alternating ring which encloses part of the gamma chain. CF(1) is attached to CF(0) by a central stalk formed by the gamma and epsilon chains, while a peripheral stalk is formed by the delta and b chains.

The protein resides in the cell membrane. The enzyme catalyses ATP + H2O + 4 H(+)(in) = ADP + phosphate + 5 H(+)(out). Its function is as follows. Produces ATP from ADP in the presence of a proton gradient across the membrane. The alpha chain is a regulatory subunit. The protein is ATP synthase subunit alpha 2 of Listeria monocytogenes serotype 4b (strain F2365).